We begin with the raw amino-acid sequence, 561 residues long: Excitatory amino acid transporter 4 (561 aa).

The Cytoplasmic segment spans residues 1–52 (MSSHGNSLFLRESGAGGGCLQGLQDSLQQRALRTRLRLQTMTREHVRRFLRR). At S2 the chain carries Phosphoserine. Helical transmembrane passes span 53-73 (NAFI…AFAL), 96-116 (MLQM…MASL), and 130-150 (VYYM…VTII). N213, N229, and N236 each carry an N-linked (GlcNAc...) asparagine glycan. A run of 3 helical transmembrane segments spans residues 259–282 (SANG…IGGM), 292–319 (FFDS…LFLI), and 341–362 (LTVI…YFLV). The discontinuously helical intramembrane region spans 368–398 (FPFIGGILQALITAMGTSSSSATLPITFRCL). L-aspartate is bound at residue 385-387 (SSS). A helical membrane pass occupies residues 408–434 (ITRFVLPVGATVNMDGTALYEALAAIF). Na(+) contacts are provided by G416, T418, and N420. L-aspartate-binding positions include T424, 465–469 (IPQAG), D498, and N505. Residues 448-481 (ITTISITATAASVGAAGIPQAGLVTMVIVLTSVG) constitute an intramembrane region (discontinuously helical). Residues 495-516 (WFLDRLRTMTNVLGDSIGAAVI) traverse the membrane as a helical segment. 2 residues coordinate Na(+): N505 and D509.

It belongs to the dicarboxylate/amino acid:cation symporter (DAACS) (TC 2.A.23) family. SLC1A6 subfamily. Homotrimer.

Its subcellular location is the cell membrane. The enzyme catalyses K(+)(in) + L-glutamate(out) + 3 Na(+)(out) + H(+)(out) = K(+)(out) + L-glutamate(in) + 3 Na(+)(in) + H(+)(in). The catalysed reaction is K(+)(in) + L-aspartate(out) + 3 Na(+)(out) + H(+)(out) = K(+)(out) + L-aspartate(in) + 3 Na(+)(in) + H(+)(in). It catalyses the reaction D-aspartate(out) + K(+)(in) + 3 Na(+)(out) + H(+)(out) = D-aspartate(in) + K(+)(out) + 3 Na(+)(in) + H(+)(in). In terms of biological role, sodium-dependent, high-affinity amino acid transporter that mediates the uptake of L-glutamate and also L-aspartate and D-aspartate. Functions as a symporter that transports one amino acid molecule together with two or three Na(+) ions and one proton, in parallel with the counter-transport of one K(+) ion. Mediates Cl(-) flux that is not coupled to amino acid transport; this avoids the accumulation of negative charges due to aspartate and Na(+) symport. Plays a redundant role in the rapid removal of released glutamate from the synaptic cleft, which is essential for terminating the postsynaptic action of glutamate. This Rattus norvegicus (Rat) protein is Excitatory amino acid transporter 4 (Slc1a6).